Reading from the N-terminus, the 380-residue chain is Cytochrome b (380 aa).

4 helical membrane passes run 33-53 (FGSL…FLAM), 77-98 (WLIR…FIHV), 113-133 (WNIG…GYVL), and 178-198 (FFAF…VHLL). 2 residues coordinate heme b: His-83 and His-97. Heme b-binding residues include His-182 and His-196. A ubiquinone is bound at residue His-201. 4 helical membrane-spanning segments follow: residues 226–246 (IKDL…VLFF), 288–308 (LGGV…PLLN), 320–340 (LTQF…WIGG), and 347–367 (FTTI…VLMP).

Belongs to the cytochrome b family. The cytochrome bc1 complex contains 11 subunits: 3 respiratory subunits (MT-CYB, CYC1 and UQCRFS1), 2 core proteins (UQCRC1 and UQCRC2) and 6 low-molecular weight proteins (UQCRH/QCR6, UQCRB/QCR7, UQCRQ/QCR8, UQCR10/QCR9, UQCR11/QCR10 and a cleavage product of UQCRFS1). This cytochrome bc1 complex then forms a dimer. Heme b is required as a cofactor.

It localises to the mitochondrion inner membrane. Component of the ubiquinol-cytochrome c reductase complex (complex III or cytochrome b-c1 complex) that is part of the mitochondrial respiratory chain. The b-c1 complex mediates electron transfer from ubiquinol to cytochrome c. Contributes to the generation of a proton gradient across the mitochondrial membrane that is then used for ATP synthesis. This is Cytochrome b (MT-CYB) from Thomasomys notatus (Distinguished oldfield mouse).